The primary structure comprises 215 residues: Ribonuclease T (215 aa).

Residues 20–194 enclose the Exonuclease domain; the sequence is VVIDVETAGF…YDTLQTAKLF (175 aa). Positions 23, 25, 181, and 186 each coordinate Mg(2+). Catalysis depends on His181, which acts as the Proton donor/acceptor.

It belongs to the RNase T family. In terms of assembly, homodimer. Requires Mg(2+) as cofactor.

In terms of biological role, trims short 3' overhangs of a variety of RNA species, leaving a one or two nucleotide 3' overhang. Responsible for the end-turnover of tRNA: specifically removes the terminal AMP residue from uncharged tRNA (tRNA-C-C-A). Also appears to be involved in tRNA biosynthesis. In Yersinia pseudotuberculosis serotype I (strain IP32953), this protein is Ribonuclease T.